A 183-amino-acid polypeptide reads, in one-letter code: MIIKREMRQDKRAQPKPPINENISAREVRLIGADGQQVGVVSIDEAIRLAEEAKLDLVEISADAVPPVCRIMDYGKHLFEKKKQAAVAKKNQKQAQVKEIKFRPGTEEGDYQVKLRNLVRFLSEGDKAKVSLRFRGREMAHQELGMELLKRVEADLVEYGTVEQHPKLEGRQLMMVIAPKKKK.

It belongs to the IF-3 family. Monomer.

It is found in the cytoplasm. Its function is as follows. IF-3 binds to the 30S ribosomal subunit and shifts the equilibrium between 70S ribosomes and their 50S and 30S subunits in favor of the free subunits, thus enhancing the availability of 30S subunits on which protein synthesis initiation begins. This is Translation initiation factor IF-3 from Pseudomonas aeruginosa (strain ATCC 15692 / DSM 22644 / CIP 104116 / JCM 14847 / LMG 12228 / 1C / PRS 101 / PAO1).